Reading from the N-terminus, the 156-residue chain is ADP-ribosylation factor-like protein 2-binding protein (156 aa).

Belongs to the ARL2BP family.

Its subcellular location is the cytoplasm. The protein localises to the mitochondrion intermembrane space. It localises to the cytoskeleton. It is found in the microtubule organizing center. The protein resides in the centrosome. Its subcellular location is the nucleus. The protein localises to the spindle. It localises to the cilium basal body. In terms of biological role, plays a role as an effector of the ADP-ribosylation factor-like protein 2, ARL2. This Gallus gallus (Chicken) protein is ADP-ribosylation factor-like protein 2-binding protein (ARL2BP).